A 383-amino-acid chain; its full sequence is Chorismate synthase (383 aa).

NADP(+) is bound by residues R39 and R45. FMN is bound by residues 128–130, G291, 306–310, and R332; these read RAS and KPIAT.

Belongs to the chorismate synthase family. As to quaternary structure, homotetramer. Requires FMNH2 as cofactor.

It carries out the reaction 5-O-(1-carboxyvinyl)-3-phosphoshikimate = chorismate + phosphate. It functions in the pathway metabolic intermediate biosynthesis; chorismate biosynthesis; chorismate from D-erythrose 4-phosphate and phosphoenolpyruvate: step 7/7. Functionally, catalyzes the anti-1,4-elimination of the C-3 phosphate and the C-6 proR hydrogen from 5-enolpyruvylshikimate-3-phosphate (EPSP) to yield chorismate, which is the branch point compound that serves as the starting substrate for the three terminal pathways of aromatic amino acid biosynthesis. This reaction introduces a second double bond into the aromatic ring system. This chain is Chorismate synthase, found in Thermus thermophilus (strain ATCC BAA-163 / DSM 7039 / HB27).